We begin with the raw amino-acid sequence, 166 residues long: 6,7-dimethyl-8-ribityllumazine synthase (166 aa).

5-amino-6-(D-ribitylamino)uracil is bound by residues Phe-22, 56–58, and 80–82; these read SME and AVI. Residue 85–86 participates in (2S)-2-hydroxy-3-oxobutyl phosphate binding; that stretch reads ET. The active-site Proton donor is the His-88. Phe-113 serves as a coordination point for 5-amino-6-(D-ribitylamino)uracil. Arg-127 lines the (2S)-2-hydroxy-3-oxobutyl phosphate pocket.

This sequence belongs to the DMRL synthase family.

It catalyses the reaction (2S)-2-hydroxy-3-oxobutyl phosphate + 5-amino-6-(D-ribitylamino)uracil = 6,7-dimethyl-8-(1-D-ribityl)lumazine + phosphate + 2 H2O + H(+). It participates in cofactor biosynthesis; riboflavin biosynthesis; riboflavin from 2-hydroxy-3-oxobutyl phosphate and 5-amino-6-(D-ribitylamino)uracil: step 1/2. In terms of biological role, catalyzes the formation of 6,7-dimethyl-8-ribityllumazine by condensation of 5-amino-6-(D-ribitylamino)uracil with 3,4-dihydroxy-2-butanone 4-phosphate. This is the penultimate step in the biosynthesis of riboflavin. In Thermotoga neapolitana (strain ATCC 49049 / DSM 4359 / NBRC 107923 / NS-E), this protein is 6,7-dimethyl-8-ribityllumazine synthase.